A 201-amino-acid polypeptide reads, in one-letter code: Retinol-binding protein 4 (201 aa).

The first 18 residues, 1–18, serve as a signal peptide directing secretion; it reads MEWVWALVLLAALGSGRG. 3 cysteine pairs are disulfide-bonded: Cys-22-Cys-178, Cys-88-Cys-192, and Cys-138-Cys-147. Position 116 (Gln-116) interacts with substrate. Arg-139 is modified (omega-N-methylarginine).

It belongs to the calycin superfamily. Lipocalin family. In terms of assembly, interacts with TTR. Interaction with TTR prevents its loss by filtration through the kidney glomeruli. Interacts with STRA6.

Its subcellular location is the secreted. Its function is as follows. Retinol-binding protein that mediates retinol transport in blood plasma. Delivers retinol from the liver stores to the peripheral tissues. Transfers the bound all-trans retinol to STRA6, that then facilitates retinol transport across the cell membrane. The chain is Retinol-binding protein 4 (RBP4) from Oryctolagus cuniculus (Rabbit).